We begin with the raw amino-acid sequence, 323 residues long: Lipoyl synthase (323 aa).

Residues cysteine 56, cysteine 61, cysteine 67, cysteine 82, cysteine 86, cysteine 89, and serine 293 each coordinate [4Fe-4S] cluster. In terms of domain architecture, Radical SAM core spans 68-282 (WEDREATFLI…AAEARELGFA (215 aa)).

It belongs to the radical SAM superfamily. Lipoyl synthase family. [4Fe-4S] cluster serves as cofactor.

The protein resides in the cytoplasm. It catalyses the reaction [[Fe-S] cluster scaffold protein carrying a second [4Fe-4S](2+) cluster] + N(6)-octanoyl-L-lysyl-[protein] + 2 oxidized [2Fe-2S]-[ferredoxin] + 2 S-adenosyl-L-methionine + 4 H(+) = [[Fe-S] cluster scaffold protein] + N(6)-[(R)-dihydrolipoyl]-L-lysyl-[protein] + 4 Fe(3+) + 2 hydrogen sulfide + 2 5'-deoxyadenosine + 2 L-methionine + 2 reduced [2Fe-2S]-[ferredoxin]. The protein operates within protein modification; protein lipoylation via endogenous pathway; protein N(6)-(lipoyl)lysine from octanoyl-[acyl-carrier-protein]: step 2/2. Its function is as follows. Catalyzes the radical-mediated insertion of two sulfur atoms into the C-6 and C-8 positions of the octanoyl moiety bound to the lipoyl domains of lipoate-dependent enzymes, thereby converting the octanoylated domains into lipoylated derivatives. This is Lipoyl synthase from Acidothermus cellulolyticus (strain ATCC 43068 / DSM 8971 / 11B).